The following is a 460-amino-acid chain: Glucan endo-1,3-beta-D-glucosidase (460 aa).

The N-terminal stretch at 1–26 (MAANVQTSSLLFLVFLLLQNFYSANS) is a signal peptide. Glutamate 123 functions as the Proton donor in the catalytic mechanism. The active-site Nucleophile is the glutamate 268. A disordered region spans residues 352–371 (NTQNPTTPATPTPTPKAAGS). Asparagine 355 is a glycosylation site (N-linked (GlcNAc...) asparagine). Residues cysteine 373 and cysteine 435 are joined by a disulfide bond. N-linked (GlcNAc...) asparagine glycosylation is present at asparagine 447.

Belongs to the glycosyl hydrolase 17 family. In terms of assembly, homodimer. Glycosylated. Post-translationally, contains two additional disulfide bonds, but it is unclear if they are between the pairs Cys-392-Cys-398 and Cys-407-Cys-453 (PudMed:18096638) or between the pairs Cys-392-Cys-453 and Cys-398-Cys-407 (PudMed:12392450). As to expression, expressed only in pollen.

Its subcellular location is the secreted. It carries out the reaction Hydrolysis of (1-&gt;3)-beta-D-glucosidic linkages in (1-&gt;3)-beta-D-glucans.. This chain is Glucan endo-1,3-beta-D-glucosidase (OLE9), found in Olea europaea (Common olive).